We begin with the raw amino-acid sequence, 282 residues long: Phosphoglycerate mutase-like protein 1 (282 aa).

Residue histidine 23 is the Tele-phosphohistidine intermediate of the active site. Catalysis depends on glutamate 135, which acts as the Proton donor/acceptor.

It belongs to the phosphoglycerate mutase family.

Its function is as follows. May play a role in carbohydrates metabolism. This is Phosphoglycerate mutase-like protein 1 from Arabidopsis thaliana (Mouse-ear cress).